Consider the following 115-residue polypeptide: NADH-ubiquinone oxidoreductase chain 3 (115 aa).

The next 3 membrane-spanning stretches (helical) occupy residues 4 to 24 (ILTL…AFWL), 55 to 75 (FFLV…LLPL), and 84 to 104 (SYLT…GLAY).

This sequence belongs to the complex I subunit 3 family. In terms of assembly, core subunit of respiratory chain NADH dehydrogenase (Complex I) which is composed of 45 different subunits. Interacts with TMEM186. Interacts with TMEM242.

It localises to the mitochondrion inner membrane. The catalysed reaction is a ubiquinone + NADH + 5 H(+)(in) = a ubiquinol + NAD(+) + 4 H(+)(out). Functionally, core subunit of the mitochondrial membrane respiratory chain NADH dehydrogenase (Complex I) which catalyzes electron transfer from NADH through the respiratory chain, using ubiquinone as an electron acceptor. Essential for the catalytic activity of complex I. The polypeptide is NADH-ubiquinone oxidoreductase chain 3 (Necromys lactens (Rufous-bellied bolo mouse)).